Here is a 262-residue protein sequence, read N- to C-terminus: Global transcriptional regulator CodY (262 aa).

A GAF domain region spans residues 1-159; that stretch reads MAHLLEKTRK…ASTVVGIQLL (159 aa). Positions 207–226 form a DNA-binding region, H-T-H motif; that stretch reads ASVIADRIGITRSVIVNALR.

The protein belongs to the CodY family.

The protein localises to the cytoplasm. DNA-binding global transcriptional regulator which is involved in the adaptive response to starvation and acts by directly or indirectly controlling the expression of numerous genes in response to nutrient availability. During rapid exponential growth, CodY is highly active and represses genes whose products allow adaptation to nutrient depletion. This Streptococcus pneumoniae (strain JJA) protein is Global transcriptional regulator CodY.